The primary structure comprises 67 residues: Probable Sec-independent protein translocase protein TatE (67 aa).

Residues 4–21 form a helical membrane-spanning segment; sequence ISITKLLVIAALVVLLFG.

The protein belongs to the TatA/E family. TatE subfamily.

The protein resides in the cell inner membrane. In terms of biological role, part of the twin-arginine translocation (Tat) system that transports large folded proteins containing a characteristic twin-arginine motif in their signal peptide across membranes. TatE shares overlapping functions with TatA. This is Probable Sec-independent protein translocase protein TatE from Citrobacter rodentium (strain ICC168) (Citrobacter freundii biotype 4280).